Here is a 235-residue protein sequence, read N- to C-terminus: MGSNIDKTLNALSQGFVSSCQPVDDGPMDKPEIVAAMAMASVEGGAIGLRIEGIDNLKAVRPHVSVPIIGIIKRDLDDSEVRITPYIEDVIALKEAGADIIAIDATHRPRPVPVEELVKKIQSLGCLVMADSSTYEEGMFCHGLGVEIIGTTLSGYTTPVTPKEPDFPFIQQLANQGCFVMAEGRFNSPQLAREAIEAGASCVTVGSAITRIEHICGWFKSEVELGKKNMVKDIA.

It belongs to the NanE family.

It catalyses the reaction an N-acyl-D-glucosamine 6-phosphate = an N-acyl-D-mannosamine 6-phosphate. The protein operates within amino-sugar metabolism; N-acetylneuraminate degradation; D-fructose 6-phosphate from N-acetylneuraminate: step 3/5. Its function is as follows. Converts N-acetylmannosamine-6-phosphate (ManNAc-6-P) to N-acetylglucosamine-6-phosphate (GlcNAc-6-P). This Aliivibrio fischeri (strain ATCC 700601 / ES114) (Vibrio fischeri) protein is Putative N-acetylmannosamine-6-phosphate 2-epimerase.